The following is a 256-amino-acid chain: UPF0246 protein Swoo_1284 (256 aa).

Belongs to the UPF0246 family.

The protein is UPF0246 protein Swoo_1284 of Shewanella woodyi (strain ATCC 51908 / MS32).